The following is a 274-amino-acid chain: Large ribosomal subunit protein uL2cz/uL2cy (274 aa).

Disordered stretches follow at residues 1–23 and 223–274; these read MAIH…SQVK and MNPV…RRSK. Residues 7–23 show a composition bias toward polar residues; it reads KTSTPSTRNGTVGSQVK.

The protein belongs to the universal ribosomal protein uL2 family. Part of the 50S ribosomal subunit.

It is found in the plastid. It localises to the chloroplast. In Nandina domestica (Heavenly bamboo), this protein is Large ribosomal subunit protein uL2cz/uL2cy (rpl2-A).